The following is a 931-amino-acid chain: Myelin regulatory factor homolog 1 (931 aa).

The Cytoplasmic portion of the chain corresponds to 1 to 658 (MSSSDLLKGE…SCGSRLSQGT (658 aa)). A disordered region spans residues 29–143 (TDEDDGSMVS…QQHQQTRGGN (115 aa)). Over residues 37-52 (VSPTSSADSMHQNLGV) the composition is skewed to polar residues. The span at 53–68 (QQQQQQMLQAQQRQNQ) shows a compositional bias: low complexity. Over residues 117-126 (DNGNQTMNNI) the composition is skewed to polar residues. The segment covering 127 to 138 (QSQQLSQQQHQQ) has biased composition (low complexity). The NDT80 DNA-binding region spans 169 to 436 (GTAAVNQPTN…TNPGSFEPQD (268 aa)). Residues 483-582 (SDIRLKEAIT…RMTGDLDSKI (100 aa)) form the Peptidase S74 domain. Residues 659–679 (VVTLVSIMAACLLAMSALYVL) form a helical membrane-spanning segment. Over 680–931 (DWHNRNYGYH…FYRMCTLSSS (252 aa)) the chain is Lumenal. 2 N-linked (GlcNAc...) asparagine glycosylation sites follow: N797 and N912.

The protein belongs to the MRF family. In terms of assembly, homotrimer. Interacts with myrf-2. Interacts (via C-terminus) with pan-1 (via LRR regions); the interaction promotes the role of myrf-1 in the synaptic remodeling of DD GABAergic motor neurons at the cell membrane. In terms of processing, myelin regulatory factor: Follows autocatalytic cleavage via the peptidase S74 domain. Autoprocessing is apparently constitutive and is essential for transcriptional activity. Widely expressed in many tissues, including neuronal, muscle and epidermal stem cells. In neurons, expressed in dorsal D (DD) GABAergic motor neurons.

The protein localises to the endoplasmic reticulum membrane. The protein resides in the nucleus. It is found in the apical cell membrane. Its subcellular location is the cytoplasm. Its function is as follows. Constitutes a precursor of the transcription factor. Mediates the autocatalytic cleavage that releases the Myelin regulatory factor homolog 1, N-terminal component that specifically activates transcription of genes involved in synaptic rewiring during nervous system maturation. In terms of biological role, membrane-bound part that has no transcription factor activity and remains attached to the endoplasmic reticulum membrane following cleavage. Functionally, transcription factor that specifically activates expression of genes involved in synaptic rewiring during nervous system maturation. Specifically required for dorsal D (DD) GABAergic motor neurons synaptic rewiring. Acts in complex with myrf-2 paralog. In Caenorhabditis elegans, this protein is Myelin regulatory factor homolog 1.